Here is a 951-residue protein sequence, read N- to C-terminus: Glycine dehydrogenase (decarboxylating) 1 (951 aa).

N6-(pyridoxal phosphate)lysine is present on K703.

The protein belongs to the GcvP family. In terms of assembly, the glycine cleavage system is composed of four proteins: P, T, L and H. Pyridoxal 5'-phosphate serves as cofactor.

The catalysed reaction is N(6)-[(R)-lipoyl]-L-lysyl-[glycine-cleavage complex H protein] + glycine + H(+) = N(6)-[(R)-S(8)-aminomethyldihydrolipoyl]-L-lysyl-[glycine-cleavage complex H protein] + CO2. In terms of biological role, the glycine cleavage system catalyzes the degradation of glycine. The P protein binds the alpha-amino group of glycine through its pyridoxal phosphate cofactor; CO(2) is released and the remaining methylamine moiety is then transferred to the lipoamide cofactor of the H protein. The protein is Glycine dehydrogenase (decarboxylating) 1 of Pseudomonas fluorescens (strain ATCC BAA-477 / NRRL B-23932 / Pf-5).